The chain runs to 470 residues: ATP synthase subunit beta (470 aa).

Glycine 157–threonine 164 is a binding site for ATP.

This sequence belongs to the ATPase alpha/beta chains family. As to quaternary structure, F-type ATPases have 2 components, CF(1) - the catalytic core - and CF(0) - the membrane proton channel. CF(1) has five subunits: alpha(3), beta(3), gamma(1), delta(1), epsilon(1). CF(0) has three main subunits: a(1), b(2) and c(9-12). The alpha and beta chains form an alternating ring which encloses part of the gamma chain. CF(1) is attached to CF(0) by a central stalk formed by the gamma and epsilon chains, while a peripheral stalk is formed by the delta and b chains.

Its subcellular location is the cell inner membrane. It carries out the reaction ATP + H2O + 4 H(+)(in) = ADP + phosphate + 5 H(+)(out). Its function is as follows. Produces ATP from ADP in the presence of a proton gradient across the membrane. The catalytic sites are hosted primarily by the beta subunits. This is ATP synthase subunit beta from Geobacter sulfurreducens (strain ATCC 51573 / DSM 12127 / PCA).